Reading from the N-terminus, the 298-residue chain is Nucleoid occlusion protein (298 aa).

Positions 152-171 form a DNA-binding region, H-T-H motif; sequence EALAQRLGKGQSTVANKLRL.

Belongs to the ParB family.

The protein resides in the cytoplasm. Its subcellular location is the nucleoid. Its function is as follows. Effects nucleoid occlusion by binding relatively nonspecifically to DNA and preventing the assembly of the division machinery in the vicinity of the nucleoid, especially under conditions that disturb the cell cycle. It helps to coordinate cell division and chromosome segregation by preventing the formation of the Z ring through the nucleoid, which would cause chromosome breakage. This is Nucleoid occlusion protein from Lysinibacillus sphaericus (strain C3-41).